Here is a 269-residue protein sequence, read N- to C-terminus: Thyroxine 5-deiodinase (269 aa).

The Cytoplasmic segment spans residues 1-14 (MLPAPHTCCRLLQQ). Residues 15–35 (LLACCLLLPRFLLTVLLLWLL) form a helical; Signal-anchor for type II membrane protein membrane-spanning segment. Over 36-269 (DFPCVRRRVI…TGNGALVIQV (234 aa)) the chain is Extracellular. Sec-133 is an active-site residue. Position 133 (Sec-133) is a non-standard amino acid, selenocysteine.

This sequence belongs to the iodothyronine deiodinase family. In terms of assembly, monomer. Homodimer. May undergo minor heretodimerization with DIO1 and DIO2.

The protein localises to the cell membrane. Its subcellular location is the endosome membrane. The catalysed reaction is 3,3',5'-triiodo-L-thyronine + iodide + A + H(+) = L-thyroxine + AH2. The enzyme catalyses 3,3'-diiodo-L-thyronine + iodide + A + H(+) = 3,3',5-triiodo-L-thyronine + AH2. It catalyses the reaction 3-iodo-L-thyronine + iodide + A + H(+) = 3,5-diiodo-L-thyronine + AH2. It carries out the reaction L-thyronine + iodide + A + H(+) = 3-iodo-L-thyronine + AH2. The catalysed reaction is 3',5'-diiodo-L-thyronine + iodide + A + H(+) = 3,3',5'-triiodo-L-thyronine + AH2. The enzyme catalyses 3'-iodo-L-thyronine + iodide + A + H(+) = 3,3'-diiodo-L-thyronine + AH2. It catalyses the reaction 3,3',5'-triiodothyronamine + iodide + A + H(+) = 3,3',5,5'-tetraiodothyronamine + AH2. It carries out the reaction 3',5'-diiodothyronamine + iodide + A + H(+) = 3,3',5'-triiodothyronamine + AH2. The catalysed reaction is 3,3'-diiodothyronamine + iodide + A + H(+) = 3,3',5-triiodothyronamine + AH2. The enzyme catalyses 3-iodothyronamine + iodide + A + H(+) = 3,5-diiodothyronamine + AH2. It catalyses the reaction 3'-iodothyronamine + iodide + A + H(+) = 3,3'-diiodothyronamine + AH2. It carries out the reaction thyronamine + iodide + A + H(+) = 3-iodothyronamine + AH2. Plays a crucial role in the metabolism of thyroid hormones (TH) and has specific roles in TH activation and inactivation by deiodination. Catalyzes the deiodination of L-thyroxine (T4) to 3,3',5'-triiodothyronine (rT3), 3,5-diiodothyronine (3,5-T2) to 3-monoiodothyronine (3-T1), rT3 to 3',5'-diiodothyronine (3',5'-T2) and 3,3'-diiodothyronine (3,3'-T2) to 3'-monoiodothyronine (3'-T1) via inner-ring deiodination (IRD). Catalyzes the deiodination of 3,5,3'-triiodothyronine (T3) to 3,3'-diiodothyronine (3,3'-T2) via IRD. Catalyzes the deiodination of 3-T1 to L-thyronine (T0) via outer-ring deiodination (ORD). Catalyzes the tyrosyl ring deiodinations of 3,3',5,5'-tetraiodothyronamine, 3,3',5'-triiodothyronamine, 3,5,3'-triiodothyronamine, 3,5-diiodothyronamine, 3,3'-diiodothyronamine and 3-iodothyronamine. This is Thyroxine 5-deiodinase (dio3) from Aquarana catesbeiana (American bullfrog).